Reading from the N-terminus, the 438-residue chain is Adenylosuccinate synthetase (438 aa).

GTP-binding positions include 13–19 and 41–43; these read GDEGKGK and GHT. Residue aspartate 14 is the Proton acceptor of the active site. Residues aspartate 14 and glycine 41 each coordinate Mg(2+). Residues 14 to 17, 39 to 42, threonine 130, arginine 144, glutamine 225, threonine 240, and arginine 310 each bind IMP; these read DEGK and NAGH. The active-site Proton donor is histidine 42. 306–312 provides a ligand contact to substrate; it reads ATTGRLR. GTP-binding positions include arginine 312, 338–340, and 421–423; these read KLD and STG.

It belongs to the adenylosuccinate synthetase family. In terms of assembly, homodimer. The cofactor is Mg(2+).

It is found in the cytoplasm. It catalyses the reaction IMP + L-aspartate + GTP = N(6)-(1,2-dicarboxyethyl)-AMP + GDP + phosphate + 2 H(+). The protein operates within purine metabolism; AMP biosynthesis via de novo pathway; AMP from IMP: step 1/2. Plays an important role in the de novo pathway of purine nucleotide biosynthesis. Catalyzes the first committed step in the biosynthesis of AMP from IMP. The polypeptide is Adenylosuccinate synthetase (Aliivibrio fischeri (strain ATCC 700601 / ES114) (Vibrio fischeri)).